The following is a 124-amino-acid chain: Single-stranded DNA-binding protein (124 aa).

It belongs to the phi29likevirus single-strand-binding protein family. In terms of assembly, monomer.

In terms of biological role, single-stranded DNA binding protein required for the elongation during viral DNA replication by strand displacement. Displaced viral DNA strands are transiently coated with the ssDNA-binding protein and therefore protected against nucleases. The latter is then probably removed by the replisome that performs lagging strand synthesis or during the events that lead up to the recombination process. Stimulates in vitro DNA replication several fold. Has helix-destabilizing activity since it removes secondary structure from the ssDNA in replicative intermediates. The polypeptide is Single-stranded DNA-binding protein (5) (Bacillus subtilis (Bacteriophage phi-29)).